The sequence spans 987 residues: Nuclear matrix constituent protein 1b (987 aa).

The segment at 1 to 25 (MASPRSAGGVGGGGGGGGGSGGAAA) is disordered. Gly residues predominate over residues 8-24 (GGVGGGGGGGGGSGGAA). Coiled-coil stretches lie at residues 403–545 (LAEL…ERRA) and 594–717 (LSKI…DREA). 2 stretches are compositionally biased toward basic and acidic residues: residues 752-764 (SDIN…HDNS) and 898-908 (CKEHEYGDKGP). 2 disordered regions span residues 752–775 (SDIN…FGRK) and 887–987 (HDEA…FLIT). A compositionally biased stretch (polar residues) spans 944–954 (ATVSATETSNV). Residues 956 to 973 (GPEDNNDSDEEDEEEEEE) show a composition bias toward acidic residues.

Belongs to the CRWN family. As to quaternary structure, interacts with SWI3C.

The protein localises to the nucleus matrix. It localises to the nucleus lamina. Architectural component of nuclear structure that plays different roles in controlling nuclear size and morphology. Involved in the modification of chromatin accessibility by interacting with SWI3C, a component of the chromatin-remodeling complex, to thus reduce the suppression effect of the complex. Acts as positive regulator of drought resistance and modulates root growth. Positively regulates the expression of genes related to root growth and drought resistance. The polypeptide is Nuclear matrix constituent protein 1b (Oryza sativa subsp. japonica (Rice)).